Here is a 46-residue protein sequence, read N- to C-terminus: Large ribosomal subunit protein bL36 (46 aa).

It belongs to the bacterial ribosomal protein bL36 family.

The sequence is that of Large ribosomal subunit protein bL36 from Klebsiella pneumoniae (strain 342).